The sequence spans 350 residues: Protein-arginine kinase (350 aa).

Positions 21-253 constitute a Phosphagen kinase C-terminal domain; that stretch reads IVISSRIRLA…VRLADQEREA (233 aa). ATP contacts are provided by residues 24–28, His90, Arg124, 175–179, and 206–211; these read SSRIR, RASTM, and RGLYGE. The RDXXRA motif of the pArg binding pocket involved in allosteric regulation motif lies at 336-341; it reads RDVHRA.

The protein belongs to the ATP:guanido phosphotransferase family.

The catalysed reaction is L-arginyl-[protein] + ATP = N(omega)-phospho-L-arginyl-[protein] + ADP + H(+). Appears to be allosterically activated by the binding of pArg-containing polypeptides to the pArg-binding pocket localized in the C-terminal domain of McsB. Catalyzes the specific phosphorylation of arginine residues in proteins. The chain is Protein-arginine kinase from Moorella thermoacetica (strain ATCC 39073 / JCM 9320).